A 497-amino-acid polypeptide reads, in one-letter code: Cytochrome P450 2D6 (497 aa).

Residue Asp301 participates in substrate binding. Residue Cys443 participates in heme binding.

Belongs to the cytochrome P450 family. The cofactor is heme.

The protein localises to the endoplasmic reticulum membrane. It is found in the microsome membrane. The enzyme catalyses (5Z,8Z,11Z,14Z)-eicosatetraenoate + reduced [NADPH--hemoprotein reductase] + O2 = (8R,9S)-epoxy-(5Z,11Z,14Z)-eicosatrienoate + oxidized [NADPH--hemoprotein reductase] + H2O + H(+). It carries out the reaction (5Z,8Z,11Z,14Z)-eicosatetraenoate + reduced [NADPH--hemoprotein reductase] + O2 = (11R,12S)-epoxy-(5Z,8Z,14Z)-eicosatrienoate + oxidized [NADPH--hemoprotein reductase] + H2O + H(+). It catalyses the reaction (5Z,8Z,11Z,14Z)-eicosatetraenoate + reduced [NADPH--hemoprotein reductase] + O2 = (14S,15R)-epoxy-(5Z,8Z,11Z)-eicosatrienoate + oxidized [NADPH--hemoprotein reductase] + H2O + H(+). The catalysed reaction is N-(5Z,8Z,11Z,14Z-eicosatetraenoyl)-ethanolamine + reduced [NADPH--hemoprotein reductase] + O2 = N-(8,9-epoxy-5Z,11Z,14Z-eicosatrienoyl)-ethanolamine + oxidized [NADPH--hemoprotein reductase] + H2O + H(+). The enzyme catalyses N-(5Z,8Z,11Z,14Z-eicosatetraenoyl)-ethanolamine + reduced [NADPH--hemoprotein reductase] + O2 = N-(11,12-epoxy-5Z,8Z,14Z-eicosatrienoyl)-ethanolamine + oxidized [NADPH--hemoprotein reductase] + H2O + H(+). It carries out the reaction N-(5Z,8Z,11Z,14Z-eicosatetraenoyl)-ethanolamine + reduced [NADPH--hemoprotein reductase] + O2 = N-(14,15-epoxy-5Z,8Z,11Z-eicosatrienoyl)-ethanolamine + oxidized [NADPH--hemoprotein reductase] + H2O + H(+). It catalyses the reaction N-(5Z,8Z,11Z,14Z-eicosatetraenoyl)-ethanolamine + reduced [NADPH--hemoprotein reductase] + O2 = N-(20-hydroxy-5Z,8Z,11Z,14Z-eicosatetraenoyl)-ethanolamine + oxidized [NADPH--hemoprotein reductase] + H2O + H(+). The catalysed reaction is (5Z,8Z,11Z,14Z,17Z)-eicosapentaenoate + reduced [NADPH--hemoprotein reductase] + O2 = (17S,18R)-epoxy-(5Z,8Z,11Z,14Z)-eicosatetraenoate + oxidized [NADPH--hemoprotein reductase] + H2O + H(+). The enzyme catalyses (4Z,7Z,10Z,13Z,16Z,19Z)-docosahexaenoate + reduced [NADPH--hemoprotein reductase] + O2 = (19R,20S)-epoxy-(4Z,7Z,10Z,13Z,16Z)-docosapentaenoate + oxidized [NADPH--hemoprotein reductase] + H2O + H(+). It carries out the reaction (4Z,7Z,10Z,13Z,16Z,19Z)-docosahexaenoate + reduced [NADPH--hemoprotein reductase] + O2 = (19S,20R)-epoxy-(4Z,7Z,10Z,13Z,16Z)-docosapentaenoate + oxidized [NADPH--hemoprotein reductase] + H2O + H(+). It catalyses the reaction cholesterol + reduced [NADPH--hemoprotein reductase] + O2 = 25-hydroxycholesterol + oxidized [NADPH--hemoprotein reductase] + H2O + H(+). The catalysed reaction is all-trans-retinol + reduced [NADPH--hemoprotein reductase] + O2 = all-trans-retinal + oxidized [NADPH--hemoprotein reductase] + 2 H2O + H(+). It participates in cofactor metabolism; retinol metabolism. It functions in the pathway lipid metabolism; fatty acid metabolism. Its pathway is steroid metabolism; cholesterol metabolism. A cytochrome P450 monooxygenase involved in the metabolism of fatty acids, steroids and retinoids. Mechanistically, uses molecular oxygen inserting one oxygen atom into a substrate, and reducing the second into a water molecule, with two electrons provided by NADPH via cytochrome P450 reductase (NADPH--hemoprotein reductase). Catalyzes the epoxidation of double bonds of polyunsaturated fatty acids (PUFA). Metabolizes endocannabinoid arachidonoylethanolamide (anandamide) to 20-hydroxyeicosatetraenoic acid ethanolamide (20-HETE-EA) and 8,9-, 11,12-, and 14,15-epoxyeicosatrienoic acid ethanolamides (EpETrE-EAs), potentially modulating endocannabinoid system signaling. Catalyzes the hydroxylation of carbon-hydrogen bonds. Metabolizes cholesterol toward 25-hydroxycholesterol, a physiological regulator of cellular cholesterol homeostasis. Catalyzes the oxidative transformations of all-trans retinol to all-trans retinal, a precursor for the active form all-trans-retinoic acid. Also involved in the oxidative metabolism of drugs such as antiarrhythmics, adrenoceptor antagonists, and tricyclic antidepressants. This Homo sapiens (Human) protein is Cytochrome P450 2D6.